We begin with the raw amino-acid sequence, 443 residues long: MQTQNAPETAENQQTDSELGRHLLTARGFHWIYGTSGDPYALTLRAESDDPALLTRRIREAGTPLWQSTTGAWVTGRHGVAAEALADPRLALRHADLPGPQRHVFSDAWSNPQLCHIIPLDRAFLHASDADHTRWARSASAVLGSAGGAPAEGVREHAGRVHREAADRTGDSFDLMADYSRPVATEAAAELLGVPAAQRERFAATCLALGVALDAALCPQPLAVTRRLTEAVEDVRALVGDLVEARRTQPGDDLLSAVLHAGSSAASAGQDALAVGVLTAVVGVEVTAGLINNTLESLLTRPVQWARLGENPELAAGAVEEALRFAPPVRLESRIAAEDLTLGGQDLPAGAQVVVHVGAANRDPEAFLAPDHFDLDRPAGQGQLSLSGPHTALFGAFARLQAETAVRTLRERRPVLAPAGAVLRRMRSPVLGAVLRFPLTTSA.

This sequence belongs to the cytochrome P450 family.

Functionally, involved in the biosynthesis of the anthracycline antitumor agent aclacinomycin A. AknT is required for the glycosylation of aklavinone aglycone by AknS to yield aclacinomycin T (rhodosaminyl-aklavinone). In Streptomyces galilaeus, this protein is Protein AknT.